A 184-amino-acid chain; its full sequence is Holliday junction branch migration complex subunit RuvA (184 aa).

Positions 1 to 64 (MIKAIEGVVT…EDANLLYGFL (64 aa)) are domain I. A domain II region spans residues 65–134 (DANEQKMFEM…IAELSDTKLI (70 aa)). The tract at residues 134–137 (ISDE) is flexible linker. Residues 138 to 184 (SVPSYQNEALLALEALGFKREKIVKILPDCKSENTSDLIKEALKKLG) are domain III.

Belongs to the RuvA family. In terms of assembly, homotetramer. Forms an RuvA(8)-RuvB(12)-Holliday junction (HJ) complex. HJ DNA is sandwiched between 2 RuvA tetramers; dsDNA enters through RuvA and exits via RuvB. An RuvB hexamer assembles on each DNA strand where it exits the tetramer. Each RuvB hexamer is contacted by two RuvA subunits (via domain III) on 2 adjacent RuvB subunits; this complex drives branch migration. In the full resolvosome a probable DNA-RuvA(4)-RuvB(12)-RuvC(2) complex forms which resolves the HJ.

The protein resides in the cytoplasm. Functionally, the RuvA-RuvB-RuvC complex processes Holliday junction (HJ) DNA during genetic recombination and DNA repair, while the RuvA-RuvB complex plays an important role in the rescue of blocked DNA replication forks via replication fork reversal (RFR). RuvA specifically binds to HJ cruciform DNA, conferring on it an open structure. The RuvB hexamer acts as an ATP-dependent pump, pulling dsDNA into and through the RuvAB complex. HJ branch migration allows RuvC to scan DNA until it finds its consensus sequence, where it cleaves and resolves the cruciform DNA. The chain is Holliday junction branch migration complex subunit RuvA from Campylobacter concisus (strain 13826).